A 343-amino-acid chain; its full sequence is Autoinducer 2 import system permease protein LsrC (343 aa).

9 helical membrane passes run 13 to 33, 38 to 58, 61 to 81, 92 to 112, 114 to 134, 154 to 174, 212 to 232, 251 to 271, and 283 to 303; these read FLAILALFGVLVALNPAYLSF, MIFASSQILILLALGAALVML, NIDVSVGSTVGLCAIAVGVAL, LFALAIGALAGAFNGLLVVGL, IPAIVATLGTLGLYRGAMLLW, VALGVSPLGMAVLFLVLIGAW, INGMLAACAGIVFASQIGFVP, GISLLGGTGTLIGAFLGAFFL, and LPAWWNDFIAGLVLLGVLVLD. A disordered region spans residues 321–343; the sequence is RFQPGNKGGKHVTPFPKRKKEVA.

The protein belongs to the binding-protein-dependent transport system permease family. AraH/RbsC subfamily. The complex is composed of two ATP-binding proteins (LsrA), two transmembrane proteins (LsrC and LsrD) and a solute-binding protein (LsrB).

The protein localises to the cell inner membrane. In terms of biological role, part of the ABC transporter complex LsrABCD involved in autoinducer 2 (AI-2) import. Probably responsible for the translocation of the substrate across the membrane. This chain is Autoinducer 2 import system permease protein LsrC (lsrC), found in Enterobacter sp. (strain 638).